We begin with the raw amino-acid sequence, 553 residues long: Arginine--tRNA ligase (553 aa).

Residues 122–132 (ANPTGFLHVGH) carry the 'HIGH' region motif.

This sequence belongs to the class-I aminoacyl-tRNA synthetase family. In terms of assembly, monomer.

It localises to the cytoplasm. It carries out the reaction tRNA(Arg) + L-arginine + ATP = L-arginyl-tRNA(Arg) + AMP + diphosphate. This Mesoplasma florum (strain ATCC 33453 / NBRC 100688 / NCTC 11704 / L1) (Acholeplasma florum) protein is Arginine--tRNA ligase.